Here is a 472-residue protein sequence, read N- to C-terminus: Probable endopolygalacturonase D (472 aa).

An N-terminal signal peptide occupies residues 1–16 (MKRGALLVPFVPLALA). Asparagine 24 carries N-linked (GlcNAc...) asparagine glycosylation. Cysteine 129 and cysteine 144 are oxidised to a cystine. PbH1 repeat units lie at residues 236 to 258 (MYYS…DIEH), 259 to 297 (TENL…DIKS), and 298 to 319 (STNL…AVSS). N-linked (GlcNAc...) asparagine glycosylation occurs at asparagine 300. Aspartate 312 acts as the Proton donor in catalysis. An intrachain disulfide couples cysteine 314 to cysteine 330. The active site involves histidine 334. PbH1 repeat units follow at residues 349–370 (VDGV…RIKS), 378–400 (VSNI…DIQQ), 412–433 (TNGV…SDGK), and 444–467 (CSNF…YPTD). Asparagine 361, asparagine 385, and asparagine 419 each carry an N-linked (GlcNAc...) asparagine glycan. 2 disulfides stabilise this stretch: cysteine 439–cysteine 444 and cysteine 462–cysteine 469.

Belongs to the glycosyl hydrolase 28 family.

The protein localises to the secreted. The catalysed reaction is (1,4-alpha-D-galacturonosyl)n+m + H2O = (1,4-alpha-D-galacturonosyl)n + (1,4-alpha-D-galacturonosyl)m.. In terms of biological role, involved in maceration and soft-rotting of plant tissue. Hydrolyzes the 1,4-alpha glycosidic bonds of de-esterified pectate in the smooth region of the plant cell wall. The sequence is that of Probable endopolygalacturonase D (pgaD) from Neosartorya fischeri (strain ATCC 1020 / DSM 3700 / CBS 544.65 / FGSC A1164 / JCM 1740 / NRRL 181 / WB 181) (Aspergillus fischerianus).